Reading from the N-terminus, the 417-residue chain is NADH-quinone oxidoreductase subunit D (417 aa).

It belongs to the complex I 49 kDa subunit family. NDH-1 is composed of 14 different subunits. Subunits NuoB, C, D, E, F, and G constitute the peripheral sector of the complex.

It is found in the cell inner membrane. It carries out the reaction a quinone + NADH + 5 H(+)(in) = a quinol + NAD(+) + 4 H(+)(out). NDH-1 shuttles electrons from NADH, via FMN and iron-sulfur (Fe-S) centers, to quinones in the respiratory chain. The immediate electron acceptor for the enzyme in this species is believed to be ubiquinone. Couples the redox reaction to proton translocation (for every two electrons transferred, four hydrogen ions are translocated across the cytoplasmic membrane), and thus conserves the redox energy in a proton gradient. This chain is NADH-quinone oxidoreductase subunit D, found in Dechloromonas aromatica (strain RCB).